The primary structure comprises 107 residues: Heme-degrading monooxygenase (107 aa).

Residues 2–94 (IIVTNTAKIT…YILDNKIAYY (93 aa)) enclose the ABM domain. Asn-6 lines the Fe cation pocket. Heme is bound at residue His-76.

The protein belongs to the antibiotic biosynthesis monooxygenase family. Heme-degrading monooxygenase IsdG subfamily. As to quaternary structure, homodimer.

The protein resides in the cytoplasm. The catalysed reaction is heme b + 3 reduced [NADPH--hemoprotein reductase] + 3 O2 = biliverdin IXalpha + CO + Fe(2+) + 3 oxidized [NADPH--hemoprotein reductase] + 3 H2O + H(+). In terms of biological role, allows bacterial pathogens to use the host heme as an iron source. Catalyzes the oxidative degradation of the heme macrocyclic porphyrin ring to the biliverdin in the presence of a suitable electron donor such as ascorbate or NADPH--cytochrome P450 reductase, with subsequent release of free iron. This is Heme-degrading monooxygenase from Bacillus cereus (strain ATCC 14579 / DSM 31 / CCUG 7414 / JCM 2152 / NBRC 15305 / NCIMB 9373 / NCTC 2599 / NRRL B-3711).